The primary structure comprises 485 residues: Probable carboxypeptidase S-like 1 (485 aa).

The signal sequence occupies residues 1 to 21 (MIFKFFFIFFLIILVIKISES). Residue histidine 111 participates in Zn(2+) binding. Residue aspartate 113 is part of the active site. Aspartate 142 is a binding site for Zn(2+). Residue glutamate 177 is the Proton acceptor of the active site. Zn(2+)-binding residues include glutamate 178, aspartate 204, and histidine 431.

This sequence belongs to the peptidase M20A family. Zn(2+) serves as cofactor.

The protein localises to the secreted. This is Probable carboxypeptidase S-like 1 from Dictyostelium discoideum (Social amoeba).